Reading from the N-terminus, the 196-residue chain is Fe/S biogenesis protein NfuA (196 aa).

[4Fe-4S] cluster-binding residues include cysteine 154 and cysteine 157.

The protein belongs to the NfuA family. Homodimer. [4Fe-4S] cluster is required as a cofactor.

In terms of biological role, involved in iron-sulfur cluster biogenesis. Binds a 4Fe-4S cluster, can transfer this cluster to apoproteins, and thereby intervenes in the maturation of Fe/S proteins. Could also act as a scaffold/chaperone for damaged Fe/S proteins. The sequence is that of Fe/S biogenesis protein NfuA from Blochmanniella pennsylvanica (strain BPEN).